A 400-amino-acid polypeptide reads, in one-letter code: DNA polymerase IV (400 aa).

A UmuC domain is found at 8 to 191 (ILLCDANSFF…LPVRELFGIG (184 aa)). Positions 12 and 109 each coordinate Mg(2+). E110 is an active-site residue.

The protein belongs to the DNA polymerase type-Y family. In terms of assembly, monomer. Mg(2+) serves as cofactor.

The protein resides in the cytoplasm. The catalysed reaction is DNA(n) + a 2'-deoxyribonucleoside 5'-triphosphate = DNA(n+1) + diphosphate. In terms of biological role, poorly processive, error-prone DNA polymerase involved in untargeted mutagenesis. Copies undamaged DNA at stalled replication forks, which arise in vivo from mismatched or misaligned primer ends. These misaligned primers can be extended by PolIV. Exhibits no 3'-5' exonuclease (proofreading) activity. May be involved in translesional synthesis, in conjunction with the beta clamp from PolIII. This Moorella thermoacetica (strain ATCC 39073 / JCM 9320) protein is DNA polymerase IV.